The chain runs to 243 residues: tRNA (guanine-N(1)-)-methyltransferase (243 aa).

Residues Gly-111 and Ile-131 to Leu-136 contribute to the S-adenosyl-L-methionine site.

It belongs to the RNA methyltransferase TrmD family. In terms of assembly, homodimer.

Its subcellular location is the cytoplasm. It catalyses the reaction guanosine(37) in tRNA + S-adenosyl-L-methionine = N(1)-methylguanosine(37) in tRNA + S-adenosyl-L-homocysteine + H(+). In terms of biological role, specifically methylates guanosine-37 in various tRNAs. The polypeptide is tRNA (guanine-N(1)-)-methyltransferase (Brevibacillus brevis (strain 47 / JCM 6285 / NBRC 100599)).